Reading from the N-terminus, the 315-residue chain is MNLAYIPSPTFSKFEIGPFTIHMYAICILIGICVAVWILTTRWKRYGGTFDQILDTTLVTVPCALVGARLYHCITTPADYFPPTGNLVNILKVWEGGMAIFGGISVGTLVAFLWCRHKHYPFAIFADAIAPALPVAQAIGRLGNWFNQELYGWPTTLPWGLKLNDADAIGKSEICYSGAQCPDYRTTLFHPTFLYEMIWNLIGAALIIYLGHKLADRLKAGQQFAMYLMWYGLGRTWIENVRINYSTVILGLRTNMWTAIIVFVLGCILFVVLYQYGPDPKAQARGLAAVTADELERQSIEEERLRQKKQAKRTK.

2 consecutive transmembrane segments (helical) span residues 19–39 (FTIH…VWIL) and 93–113 (VWEG…VAFL). R141 serves as a coordination point for a 1,2-diacyl-sn-glycero-3-phospho-(1'-sn-glycerol). The next 2 helical transmembrane spans lie at 188 to 208 (LFHP…ALII) and 256 to 276 (MWTA…LYQY).

It belongs to the Lgt family.

It localises to the cell membrane. It catalyses the reaction L-cysteinyl-[prolipoprotein] + a 1,2-diacyl-sn-glycero-3-phospho-(1'-sn-glycerol) = an S-1,2-diacyl-sn-glyceryl-L-cysteinyl-[prolipoprotein] + sn-glycerol 1-phosphate + H(+). Its pathway is protein modification; lipoprotein biosynthesis (diacylglyceryl transfer). Its function is as follows. Catalyzes the transfer of the diacylglyceryl group from phosphatidylglycerol to the sulfhydryl group of the N-terminal cysteine of a prolipoprotein, the first step in the formation of mature lipoproteins. The sequence is that of Phosphatidylglycerol--prolipoprotein diacylglyceryl transferase from Bifidobacterium longum subsp. infantis (strain ATCC 15697 / DSM 20088 / JCM 1222 / NCTC 11817 / S12).